Consider the following 1005-residue polypeptide: Beta/gamma crystallin domain-containing protein 3 (1005 aa).

Residues Ser122, Ser129, Ser130, Ser136, and Ser140 each carry the phosphoserine modification. 2 disordered regions span residues Glu132–Val159 and Asn173–Thr198. The span at Gln180–Ala189 shows a compositional bias: acidic residues. 9 consecutive Beta/gamma crystallin 'Greek key' domains span residues Gly367–Leu416, Gly462–Gln500, Leu512–Gly556, Gly557–Gln599, Ser605–Ser647, Gly648–Gln690, His701–Arg737, Gly738–Asp781, and Gly828–Lys869. The Ricin B-type lectin domain maps to Pro871–Glu1003.

Belongs to the beta/gamma-crystallin family.

This Mus musculus (Mouse) protein is Beta/gamma crystallin domain-containing protein 3 (Crybg3).